The chain runs to 135 residues: T-cell receptor beta chain V region 3H.25 (135 aa).

A signal peptide spans 1 to 20 (MATRLLCYTVLCLLGARILN). Positions 21–115 (SKVIQTPRYL…SALYLCASSL (95 aa)) are v segment. C42 and C111 are disulfide-bonded. Residues 116–118 (FGT) form a d segment region. Positions 119-135 (SDYTFGSGTRLLVIGKA) are j segment.

The polypeptide is T-cell receptor beta chain V region 3H.25 (Mus musculus (Mouse)).